A 758-amino-acid chain; its full sequence is 5-methyltetrahydropteroyltriglutamate--homocysteine methyltransferase (758 aa).

Residues 16–19 (RELK) and K116 each bind 5-methyltetrahydropteroyltri-L-glutamate. Residues 436–438 (IGS) and E489 contribute to the L-homocysteine site. L-methionine is bound by residues 436 to 438 (IGS) and E489. 5-methyltetrahydropteroyltri-L-glutamate-binding positions include 520-521 (RC) and W566. An L-homocysteine-binding site is contributed by D604. D604 contributes to the L-methionine binding site. E610 serves as a coordination point for 5-methyltetrahydropteroyltri-L-glutamate. Zn(2+) contacts are provided by H646, C648, and E670. H699 serves as the catalytic Proton donor. C731 contacts Zn(2+).

Belongs to the vitamin-B12 independent methionine synthase family. Zn(2+) is required as a cofactor.

The enzyme catalyses 5-methyltetrahydropteroyltri-L-glutamate + L-homocysteine = tetrahydropteroyltri-L-glutamate + L-methionine. The protein operates within amino-acid biosynthesis; L-methionine biosynthesis via de novo pathway; L-methionine from L-homocysteine (MetE route): step 1/1. Catalyzes the transfer of a methyl group from 5-methyltetrahydrofolate to homocysteine resulting in methionine formation. This Xylella fastidiosa (strain M23) protein is 5-methyltetrahydropteroyltriglutamate--homocysteine methyltransferase.